The primary structure comprises 250 residues: Carboxymethylproline synthase (250 aa).

60–64 lines the malonyl-CoA pocket; it reads AGGDF.

This sequence belongs to the enoyl-CoA hydratase/isomerase family. Homotrimer.

The catalysed reaction is (S)-1-pyrroline-5-carboxylate + malonyl-CoA + H2O + H(+) = (2S,5S)-5-carboxymethylproline + CO2 + CoA. It participates in antibiotic biosynthesis; carbapenem biosynthesis. In terms of biological role, catalyzes the formation of (2S,5S)-carboxymethylproline (t-CMP) from malonyl-CoA and (S)-1-pyrroline-5-carboxylate, the first step in the biosynthesis of (5R)-carbapen-2-em-3-carboxylate, a beta-lactam antibiotic of the carbapenem class. Also catalyzes the independent decarboxylation of malonyl-CoA and methylmalonyl-CoA and the hydrolysis of CoA esters such as acetyl-CoA and propionyl-CoA. Catalyzes the reaction with a C2 epimeric mixture of methylmalonyl-CoA to give a 55:45 mixture of (6R)- and (6S)-epimers of 6-methyl-t-CMP, under standard incubation conditions. The chain is Carboxymethylproline synthase from Pectobacterium carotovorum subsp. carotovorum (Erwinia carotovora subsp. carotovora).